Reading from the N-terminus, the 274-residue chain is Aliphatic sulfonates import ATP-binding protein SsuB 2 (274 aa).

The ABC transporter domain maps to 21-235 (VQLRNVVRQF…DSGQAGFQLI (215 aa)). 53-60 (GASGSGKT) provides a ligand contact to ATP.

The protein belongs to the ABC transporter superfamily. Aliphatic sulfonates importer (TC 3.A.1.17.2) family. In terms of assembly, the complex is composed of two ATP-binding proteins (SsuB), two transmembrane proteins (SsuC) and a solute-binding protein (SsuA).

The protein localises to the cell inner membrane. It catalyses the reaction ATP + H2O + aliphatic sulfonate-[sulfonate-binding protein]Side 1 = ADP + phosphate + aliphatic sulfonateSide 2 + [sulfonate-binding protein]Side 1.. In terms of biological role, part of the ABC transporter complex SsuABC involved in aliphatic sulfonates import. Responsible for energy coupling to the transport system. In Pseudomonas syringae pv. syringae (strain B728a), this protein is Aliphatic sulfonates import ATP-binding protein SsuB 2.